Consider the following 520-residue polypeptide: ATP-dependent RNA helicase CshA (520 aa).

Residues 2–30 (TKFSEFGLDEKIVKSVNRMGFEEATPIQE) carry the Q motif motif. The 171-residue stretch at 33–203 (IPLGLEGKDL…ERFMHSPELI (171 aa)) folds into the Helicase ATP-binding domain. 46–53 (AQTGTGKT) contributes to the ATP binding site. A DEAD box motif is present at residues 151–154 (DEAD). Residues 214–374 (LIEQFFVKVH…PLQAPTWDEA (161 aa)) enclose the Helicase C-terminal domain. The segment covering 428–439 (KTPVHITEERPL) has biased composition (basic and acidic residues). The segment at 428 to 520 (KTPVHITEER…NKGNYSQKSK (93 aa)) is disordered. Composition is skewed to gly residues over residues 442-468 (RGGG…GKGG) and 482-496 (SGGG…GGGG).

This sequence belongs to the DEAD box helicase family. CshA subfamily. As to quaternary structure, oligomerizes, may be a member of the RNA degradosome.

The protein localises to the cytoplasm. The enzyme catalyses ATP + H2O = ADP + phosphate + H(+). Its function is as follows. DEAD-box RNA helicase possibly involved in RNA degradation. Unwinds dsRNA in both 5'- and 3'-directions, has RNA-dependent ATPase activity. Involved in cold tolerance, motility and alcohol tolerance. The polypeptide is ATP-dependent RNA helicase CshA (Listeria monocytogenes serovar 1/2a (strain ATCC BAA-679 / EGD-e)).